The sequence spans 269 residues: Proline-rich protein 7 (269 aa).

The Extracellular segment spans residues 1–9 (MVMSQGTYT). The required for interaction with NMDA receptors stretch occupies residues 1–44 (MVMSQGTYTFLTCFAGFWLIWGLIVLLCCFCSFLRRRLKRRQEE). Positions 2–39 (VMSQGTYTFLTCFAGFWLIWGLIVLLCCFCSFLRRRLK) are required for membrane localization. A helical; Signal-anchor for type III membrane protein membrane pass occupies residues 10-30 (FLTCFAGFWLIWGLIVLLCCF). Residues 31-269 (CSFLRRRLKR…IPLFGRTTAV (239 aa)) are Cytoplasmic-facing. Disordered regions lie at residues 63–83 (GSLA…RSRL) and 97–121 (PLLH…PHPP). At serine 64 the chain carries Phosphoserine. Residues 108 to 117 (AHPHPHHHAL) show a composition bias toward basic residues. The segment at 146 to 166 (PCYEEAVLMAEPPPPYSEVLT) is required for internalization. The required for apoptosis induction stretch occupies residues 146-269 (PCYEEAVLMA…IPLFGRTTAV (124 aa)). A PDZ-binding motif is present at residues 267–269 (TAV).

Forms a complex with NMDA receptor zeta subunit GRIN1 and epsilon subunit GRIN2B. Interacts with GRIN2B. Interacts with GRIN1; the interaction is reduced upon NMDA receptor activity. Found in a postsynaptic membrane complex with DLG4 and GRIN1. Interacts with DLG4 (via PDZ3 domain and to lesser degree via PDZ2 domain). Interacts with JUN. Found in a complex with JUN and FBXW7. Interacts with JUN and FBXW7; the interaction inhibits ubiquitination-mediated JUN degradation promoting its phosphorylation and transcriptional activity. Interacts with SRC. In terms of processing, palmitoylated. Tyrosine phosphorylated, possibly by SRC. In terms of tissue distribution, highly expressed in brain, moderately expressed in lymph nodes and T cells and low expression in thymus and spleen. Expressed in single positive progenitor thymocytes, particularly in CD8 single positive thymocytes.

The protein localises to the cell membrane. It is found in the postsynaptic cell membrane. The protein resides in the postsynaptic density membrane. It localises to the cytoplasm. Its subcellular location is the perinuclear region. The protein localises to the synapse. It is found in the cell projection. The protein resides in the dendrite. It localises to the nucleus. In terms of biological role, acts as a synapse-to-nucleus messenger to promote NMDA receptor-mediated excitotoxicity in neurons in a JUN-dependent manner. Inhibits ubiquitination-mediated degradation and promotes phosphorylation and transcriptional activity of transcription factor JUN. Might play a redundant role in the regulation of T cell receptor signaling. Might promote apoptosis in T cells. The polypeptide is Proline-rich protein 7 (Prr7) (Mus musculus (Mouse)).